Consider the following 357-residue polypeptide: Outer membrane porin protein OmpD (357 aa).

A signal peptide spans 1–21 (MKLKLVAVAVTTLLAAGAVNA).

This sequence belongs to the Gram-negative porin family. As to quaternary structure, homotrimer.

Its subcellular location is the cell outer membrane. In terms of biological role, forms pores that allow passive diffusion of small molecules across the outer membrane. This Citrobacter koseri (strain ATCC BAA-895 / CDC 4225-83 / SGSC4696) protein is Outer membrane porin protein OmpD (ompD).